The sequence spans 75 residues: Exodeoxyribonuclease 7 small subunit (75 aa).

It belongs to the XseB family. As to quaternary structure, heterooligomer composed of large and small subunits.

The protein resides in the cytoplasm. The enzyme catalyses Exonucleolytic cleavage in either 5'- to 3'- or 3'- to 5'-direction to yield nucleoside 5'-phosphates.. Its function is as follows. Bidirectionally degrades single-stranded DNA into large acid-insoluble oligonucleotides, which are then degraded further into small acid-soluble oligonucleotides. The protein is Exodeoxyribonuclease 7 small subunit of Pelobacter propionicus (strain DSM 2379 / NBRC 103807 / OttBd1).